The sequence spans 57 residues: UPF0391 membrane protein azo1765 (57 aa).

Helical transmembrane passes span 1–21 (MIKW…FGFT) and 33–53 (VLFF…VGLG).

The protein belongs to the UPF0391 family.

The protein resides in the cell membrane. The sequence is that of UPF0391 membrane protein azo1765 from Azoarcus sp. (strain BH72).